The primary structure comprises 128 residues: Small ribosomal subunit protein uS11 (128 aa).

Belongs to the universal ribosomal protein uS11 family. In terms of assembly, part of the 30S ribosomal subunit. Interacts with proteins S7 and S18. Binds to IF-3.

Functionally, located on the platform of the 30S subunit, it bridges several disparate RNA helices of the 16S rRNA. Forms part of the Shine-Dalgarno cleft in the 70S ribosome. In Leuconostoc mesenteroides subsp. mesenteroides (strain ATCC 8293 / DSM 20343 / BCRC 11652 / CCM 1803 / JCM 6124 / NCDO 523 / NBRC 100496 / NCIMB 8023 / NCTC 12954 / NRRL B-1118 / 37Y), this protein is Small ribosomal subunit protein uS11.